The following is a 225-amino-acid chain: NAD(P)H-quinone oxidoreductase subunit K, chloroplastic (225 aa).

Positions 43, 44, 108, and 139 each coordinate [4Fe-4S] cluster.

The protein belongs to the complex I 20 kDa subunit family. As to quaternary structure, NDH is composed of at least 16 different subunits, 5 of which are encoded in the nucleus. The cofactor is [4Fe-4S] cluster.

The protein localises to the plastid. The protein resides in the chloroplast thylakoid membrane. It catalyses the reaction a plastoquinone + NADH + (n+1) H(+)(in) = a plastoquinol + NAD(+) + n H(+)(out). The enzyme catalyses a plastoquinone + NADPH + (n+1) H(+)(in) = a plastoquinol + NADP(+) + n H(+)(out). In terms of biological role, NDH shuttles electrons from NAD(P)H:plastoquinone, via FMN and iron-sulfur (Fe-S) centers, to quinones in the photosynthetic chain and possibly in a chloroplast respiratory chain. The immediate electron acceptor for the enzyme in this species is believed to be plastoquinone. Couples the redox reaction to proton translocation, and thus conserves the redox energy in a proton gradient. The sequence is that of NAD(P)H-quinone oxidoreductase subunit K, chloroplastic from Platanus occidentalis (Sycamore).